Consider the following 152-residue polypeptide: Superoxide dismutase [Cu-Zn] 2 (152 aa).

His45, His47, and His62 together coordinate Cu cation. A disulfide bridge connects residues Cys56 and Cys145. 4 residues coordinate Zn(2+): His62, His70, His79, and Asp82. Residue His119 coordinates Cu cation.

Belongs to the Cu-Zn superoxide dismutase family. As to quaternary structure, homodimer. It depends on Cu cation as a cofactor. Zn(2+) serves as cofactor.

The protein resides in the cytoplasm. The enzyme catalyses 2 superoxide + 2 H(+) = H2O2 + O2. Destroys radicals which are normally produced within the cells and which are toxic to biological systems. In Solanum lycopersicum (Tomato), this protein is Superoxide dismutase [Cu-Zn] 2 (SODCC.5).